The following is a 91-amino-acid chain: Progonadoliberin-1 (91 aa).

The first 21 residues, 1–21, serve as a signal peptide directing secretion; that stretch reads MVVKTWMPWLLVSSVLSQGCC. At glutamine 22 the chain carries Pyrrolidone carboxylic acid. Glycine 31 carries the glycine amide modification.

This sequence belongs to the GnRH family. In terms of tissue distribution, expressed in the cell bodies of a cluster of neurons in the preoptic region.

Its subcellular location is the secreted. Its function is as follows. Stimulates the secretion of gonadotropins. The sequence is that of Progonadoliberin-1 (gnrh1) from Oryzias latipes (Japanese rice fish).